Consider the following 244-residue polypeptide: Small ribosomal subunit protein uS2m (244 aa).

This sequence belongs to the universal ribosomal protein uS2 family.

The protein localises to the mitochondrion. The sequence is that of Small ribosomal subunit protein uS2m (mrps2) from Dictyostelium discoideum (Social amoeba).